The primary structure comprises 337 residues: Pantothenate synthetase (337 aa).

Residue 31–38 (MGALHEGH) participates in ATP binding. Catalysis depends on His38, which acts as the Proton donor. Gln65 is a (R)-pantoate binding site. Gln65 contacts beta-alanine. 152–155 (GQKD) provides a ligand contact to ATP. Gln158 lines the (R)-pantoate pocket. Residues Val181 and 189 to 192 (LSSR) contribute to the ATP site.

It belongs to the pantothenate synthetase family. As to quaternary structure, homodimer.

It is found in the cytoplasm. It carries out the reaction (R)-pantoate + beta-alanine + ATP = (R)-pantothenate + AMP + diphosphate + H(+). It functions in the pathway cofactor biosynthesis; (R)-pantothenate biosynthesis; (R)-pantothenate from (R)-pantoate and beta-alanine: step 1/1. Functionally, catalyzes the condensation of pantoate with beta-alanine in an ATP-dependent reaction via a pantoyl-adenylate intermediate. The polypeptide is Pantothenate synthetase (Streptomyces coelicolor (strain ATCC BAA-471 / A3(2) / M145)).